The following is a 504-amino-acid chain: UDP-N-acetylmuramoylalanine--D-glutamate ligase (504 aa).

An ATP-binding site is contributed by Gly129 to Thr135.

The protein belongs to the MurCDEF family.

It localises to the cytoplasm. The catalysed reaction is UDP-N-acetyl-alpha-D-muramoyl-L-alanine + D-glutamate + ATP = UDP-N-acetyl-alpha-D-muramoyl-L-alanyl-D-glutamate + ADP + phosphate + H(+). Its pathway is cell wall biogenesis; peptidoglycan biosynthesis. Its function is as follows. Cell wall formation. Catalyzes the addition of glutamate to the nucleotide precursor UDP-N-acetylmuramoyl-L-alanine (UMA). The chain is UDP-N-acetylmuramoylalanine--D-glutamate ligase from Burkholderia mallei (strain ATCC 23344).